Reading from the N-terminus, the 334-residue chain is uncharacterized protein (334 aa).

Belongs to the PAPS reductase family.

This is an uncharacterized protein from Escherichia phage 186 (Bacteriophage 186).